The primary structure comprises 396 residues: (S)-8-oxocitronellyl enol synthase ISY2 (396 aa).

NADP(+)-binding positions include 38 to 40 (TGL), 66 to 67 (RR), 84 to 85 (DV), 108 to 109 (TW), glutamine 146, tyrosine 182, isoleucine 209, and 216 to 218 (SMM). Tyrosine 182 is a catalytic residue.

This sequence belongs to the short-chain dehydrogenases/reductases (SDR) family.

The catalysed reaction is (S)-8-oxocitronellyl enol + NADP(+) = (6E)-8-oxogeranial + NADPH + H(+). It catalyses the reaction (S)-8-oxocitronellyl enol + NAD(+) = (6E)-8-oxogeranial + NADH + H(+). Functionally, iridoid synthase that catalyzes the first step in generation of the iridoid ring scaffold using the linear monoterpene (6E)-8-oxogeranial as substrate. Iridoids comprise a large family of distinctive bicyclic monoterpenes that possess a wide range of pharmacological activities, including anticancer, anti-inflammatory, antifungal and antibacterial activities. Catalyzes the conversion of the linear monoterpene (6E)-8-oxogeranial to (S)-8-oxocitronellyl enol, a precursor of nepetalactones, which are metabolites that are both insect-repellent and have euphoric effect in cats. This Nepeta racemosa (Catmint) protein is (S)-8-oxocitronellyl enol synthase ISY2.